Here is a 447-residue protein sequence, read N- to C-terminus: Probable glycine dehydrogenase (decarboxylating) subunit 1 (447 aa).

This sequence belongs to the GcvP family. N-terminal subunit subfamily. As to quaternary structure, the glycine cleavage system is composed of four proteins: P, T, L and H. In this organism, the P 'protein' is a heterodimer of two subunits.

It carries out the reaction N(6)-[(R)-lipoyl]-L-lysyl-[glycine-cleavage complex H protein] + glycine + H(+) = N(6)-[(R)-S(8)-aminomethyldihydrolipoyl]-L-lysyl-[glycine-cleavage complex H protein] + CO2. In terms of biological role, the glycine cleavage system catalyzes the degradation of glycine. The P protein binds the alpha-amino group of glycine through its pyridoxal phosphate cofactor; CO(2) is released and the remaining methylamine moiety is then transferred to the lipoamide cofactor of the H protein. The chain is Probable glycine dehydrogenase (decarboxylating) subunit 1 from Bacillus cytotoxicus (strain DSM 22905 / CIP 110041 / 391-98 / NVH 391-98).